Reading from the N-terminus, the 170-residue chain is Large ribosomal subunit protein uL11 (170 aa).

The protein belongs to the universal ribosomal protein uL11 family. Part of the ribosomal stalk of the 50S ribosomal subunit. Interacts with L10 and the large rRNA to form the base of the stalk. L10 forms an elongated spine to which L12 dimers bind in a sequential fashion forming a multimeric L10(L12)X complex.

Its function is as follows. Forms part of the ribosomal stalk which helps the ribosome interact with GTP-bound translation factors. The protein is Large ribosomal subunit protein uL11 of Saccharolobus islandicus (strain M.16.27) (Sulfolobus islandicus).